We begin with the raw amino-acid sequence, 148 residues long: Sporulation inhibitor of replication protein SirA (148 aa).

Belongs to the SirA family. In terms of assembly, interacts with DnaA. Forms a 1:1 complex with domain I of DnaA.

It is found in the cytoplasm. Functionally, inhibits DNA replication initiation during sporulation, preventing overinitiation and thus enforcing diploidy; probably the main regulator of sporulation replication initiation under Spo0A control. During sporulation SirA prevents DnaA association with the replication origin to prevent excessive chromosome replication. Alternatively SirA binds to domain I of DnaA and prevent its interaction with DnaD, preventing DNA replication initiation. Upon ectopic expression during vegetative growth reduces chromosome copy number, leading to elongated cells with that can have a single nucleoid or be anucleate. Ectopic expression during vegetative growth blocks DnaA at oriC while blocking recruitment of DnaD to oriC. Plays a significant role during the onset of sporulation. This Bacillus subtilis (strain 168) protein is Sporulation inhibitor of replication protein SirA.